The following is a 322-amino-acid chain: Undecaprenyl-phosphate 4-deoxy-4-formamido-L-arabinose transferase (322 aa).

Residues 1-235 (MFEIHPVKKV…TCLTTTPLRM (235 aa)) lie on the Cytoplasmic side of the membrane. Residues 236–256 (LSLLGSIIAIGGFSIAVLLVI) form a helical membrane-spanning segment. Residues 257 to 269 (LRLTFGPQWAAEG) lie on the Periplasmic side of the membrane. A helical membrane pass occupies residues 270–290 (VFMLFAVLFTFIGAQFIGMGL). At 291 to 322 (LGEYIGRIYTDVRARPRYFVQQVIRPSSKENE) the chain is on the cytoplasmic side.

It belongs to the glycosyltransferase 2 family.

It is found in the cell inner membrane. The catalysed reaction is UDP-4-deoxy-4-formamido-beta-L-arabinose + di-trans,octa-cis-undecaprenyl phosphate = 4-deoxy-4-formamido-alpha-L-arabinopyranosyl di-trans,octa-cis-undecaprenyl phosphate + UDP. It functions in the pathway glycolipid biosynthesis; 4-amino-4-deoxy-alpha-L-arabinose undecaprenyl phosphate biosynthesis; 4-amino-4-deoxy-alpha-L-arabinose undecaprenyl phosphate from UDP-4-deoxy-4-formamido-beta-L-arabinose and undecaprenyl phosphate: step 1/2. Its pathway is bacterial outer membrane biogenesis; lipopolysaccharide biosynthesis. Functionally, catalyzes the transfer of 4-deoxy-4-formamido-L-arabinose from UDP to undecaprenyl phosphate. The modified arabinose is attached to lipid A and is required for resistance to polymyxin and cationic antimicrobial peptides. This chain is Undecaprenyl-phosphate 4-deoxy-4-formamido-L-arabinose transferase, found in Shigella sonnei (strain Ss046).